The sequence spans 64 residues: Large ribosomal subunit protein uL29 (64 aa).

It belongs to the universal ribosomal protein uL29 family.

This chain is Large ribosomal subunit protein uL29 (rpl29), found in Methanothermobacter thermautotrophicus (strain ATCC 29096 / DSM 1053 / JCM 10044 / NBRC 100330 / Delta H) (Methanobacterium thermoautotrophicum).